The sequence spans 227 residues: ATP-dependent dethiobiotin synthetase BioD (227 aa).

13-18 (DIGKTY) lines the ATP pocket. Thr-17 contributes to the Mg(2+) binding site. Residue Lys-38 is part of the active site. A substrate-binding site is contributed by Ser-42. ATP is bound by residues Asp-55, 116 to 119 (EGSG), and 179 to 180 (NN). The Mg(2+) site is built by Asp-55 and Glu-116.

The protein belongs to the dethiobiotin synthetase family. In terms of assembly, homodimer. Mg(2+) is required as a cofactor.

Its subcellular location is the cytoplasm. It carries out the reaction (7R,8S)-7,8-diammoniononanoate + CO2 + ATP = (4R,5S)-dethiobiotin + ADP + phosphate + 3 H(+). Its pathway is cofactor biosynthesis; biotin biosynthesis; biotin from 7,8-diaminononanoate: step 1/2. Catalyzes a mechanistically unusual reaction, the ATP-dependent insertion of CO2 between the N7 and N8 nitrogen atoms of 7,8-diaminopelargonic acid (DAPA, also called 7,8-diammoniononanoate) to form a ureido ring. The protein is ATP-dependent dethiobiotin synthetase BioD of Clostridium botulinum (strain 657 / Type Ba4).